The chain runs to 509 residues: Mitogen-activated protein kinase sma-5 (509 aa).

The disordered stretch occupies residues 19-72 (DPITSMSPPQENRSPKAEYLNNFFNTNPTNGKSRGSQEAPRKPLGQTNLNVQGS). 2 stretches are compositionally biased toward polar residues: residues 20–30 (PITSMSPPQEN) and 40–54 (NFFNTNPTNGKSRGS). One can recognise a Protein kinase domain in the interval 105–411 (YEPTQNIGSG…IQDALLHPYI (307 aa)). ATP-binding positions include 111–119 (IGSGAFGIV) and lysine 134. Catalysis depends on aspartate 231, which acts as the Proton acceptor. Residues 460-482 (YSELHSGDSTGSTSDMSTNTSGE) are disordered. Residues 466 to 481 (GDSTGSTSDMSTNTSG) show a composition bias toward low complexity.

It belongs to the protein kinase superfamily. CMGC Ser/Thr protein kinase family. MAP kinase subfamily. Mg(2+) is required as a cofactor. Expressed in intestine with a stronger expression in the four most anterior cells, muscles, excretory cell, pharynx and, to a lesser extent, in hypodermis.

It catalyses the reaction L-seryl-[protein] + ATP = O-phospho-L-seryl-[protein] + ADP + H(+). It carries out the reaction L-threonyl-[protein] + ATP = O-phospho-L-threonyl-[protein] + ADP + H(+). Serine/threonine-protein kinase involved in the postembryonic regulation of body size, mainly through control of cell growth. In particular, controls the volume of intestine, muscles and hypodermis. In addition, regulates growth, intestinal granule distribution, lifespan and number of offspring. The sequence is that of Mitogen-activated protein kinase sma-5 from Caenorhabditis elegans.